Reading from the N-terminus, the 156-residue chain is Flagellar assembly factor FliW (156 aa).

It belongs to the FliW family. Interacts with translational regulator CsrA and flagellin(s).

It localises to the cytoplasm. In terms of biological role, acts as an anti-CsrA protein, binds CsrA and prevents it from repressing translation of its target genes, one of which is flagellin. Binds to flagellin and participates in the assembly of the flagellum. This is Flagellar assembly factor FliW from Lachnoclostridium phytofermentans (strain ATCC 700394 / DSM 18823 / ISDg) (Clostridium phytofermentans).